The chain runs to 82 residues: RNA-binding protein GTNG_0100 (82 aa).

Belongs to the eukaryotic ribosomal protein eL8 family.

The protein is RNA-binding protein GTNG_0100 of Geobacillus thermodenitrificans (strain NG80-2).